Reading from the N-terminus, the 440-residue chain is T-box transcription factor TBX20 (440 aa).

The T-box DNA-binding region spans 103 to 282; sequence LWDKFHDLGT…SNPFAKGFRD (180 aa).

It is found in the nucleus. Its function is as follows. Transcriptional regulator that may be involved in heart developmental processes. This is T-box transcription factor TBX20 (tbx20) from Xenopus tropicalis (Western clawed frog).